The following is a 306-amino-acid chain: Ribosomal protein L11 methyltransferase (306 aa).

The S-adenosyl-L-methionine site is built by Thr-154, Gly-179, Asp-201, and Asn-242.

Belongs to the methyltransferase superfamily. PrmA family.

The protein resides in the cytoplasm. It catalyses the reaction L-lysyl-[protein] + 3 S-adenosyl-L-methionine = N(6),N(6),N(6)-trimethyl-L-lysyl-[protein] + 3 S-adenosyl-L-homocysteine + 3 H(+). Functionally, methylates ribosomal protein L11. The sequence is that of Ribosomal protein L11 methyltransferase from Xylella fastidiosa (strain Temecula1 / ATCC 700964).